Here is a 92-residue protein sequence, read N- to C-terminus: Small ribosomal subunit protein uS19 (92 aa).

The protein belongs to the universal ribosomal protein uS19 family.

In terms of biological role, protein S19 forms a complex with S13 that binds strongly to the 16S ribosomal RNA. This is Small ribosomal subunit protein uS19 from Treponema denticola (strain ATCC 35405 / DSM 14222 / CIP 103919 / JCM 8153 / KCTC 15104).